The sequence spans 750 residues: GRIP and coiled-coil domain-containing protein C27D7.02c (750 aa).

Disordered regions lie at residues 14-53 (AQGQ…AKNM) and 188-280 (KTVE…RDIA). Composition is skewed to basic and acidic residues over residues 18–34 (EEAK…DQLR) and 188–198 (KTVETKNDVPE). Residues 28–182 (QEEDQLRRNN…AQSIEQEVIS (155 aa)) are a coiled coil. A compositionally biased stretch (polar residues) spans 201–213 (RPSTDTIGVSSAL). Residues 213 to 243 (LSKKKKKRNRKNQKKKSTKQNIEATTENDAL) are a coiled coil. Basic residues predominate over residues 214–230 (SKKKKKRNRKNQKKKST). Residues 233–251 (NIEATTENDALSESISTPD) show a composition bias toward polar residues. Basic and acidic residues predominate over residues 269–280 (ADSKEEERRDIA). Residues 344-665 (KLVEELTKQL…YEHLQKSFKN (322 aa)) adopt a coiled-coil conformation. Residues 672-703 (KQQPSNHGRNSSVSRSSSSVEVNSKHPGSDDM) are disordered. Residues 676–693 (SNHGRNSSVSRSSSSVEV) are compositionally biased toward low complexity. The segment covering 694-703 (NSKHPGSDDM) has biased composition (basic and acidic residues). Residues 700-748 (SDDMLIDKEYTRNILFQFLEQRDRRPEIVNLLSILLDLSEEQKQKLLSV) enclose the GRIP domain.

The protein resides in the cytoplasm. This Schizosaccharomyces pombe (strain 972 / ATCC 24843) (Fission yeast) protein is GRIP and coiled-coil domain-containing protein C27D7.02c.